Here is a 586-residue protein sequence, read N- to C-terminus: Laccase-9 (586 aa).

The N-terminal stretch at 1 to 25 (MPRVHHSLSNQAFLVLLLFSSIASA) is a signal peptide. 2 Plastocyanin-like domains span residues 33–149 (HVKD…PRSG) and 159–307 (KEVP…YEGA). 3 N-linked (GlcNAc...) asparagine glycosylation sites follow: Asn52, Asn74, and Asn79. Cu cation-binding residues include His83 and His85. Asn111 is a glycosylation site (N-linked (GlcNAc...) asparagine). Cu cation-binding residues include His128 and His130. 5 N-linked (GlcNAc...) asparagine glycosylation sites follow: Asn236, Asn333, Asn385, Asn403, and Asn451. The Plastocyanin-like 3 domain maps to 411-552 (DFPDQPPLKF…MMAFIVQNGP (142 aa)). Residues His469, His472, His474, His531, Cys532, His533, and His537 each contribute to the Cu cation site.

This sequence belongs to the multicopper oxidase family. Requires Cu cation as cofactor. As to expression, predominantly expressed in roots.

The protein localises to the secreted. It is found in the extracellular space. Its subcellular location is the apoplast. It catalyses the reaction 4 hydroquinone + O2 = 4 benzosemiquinone + 2 H2O. Lignin degradation and detoxification of lignin-derived products. In Arabidopsis thaliana (Mouse-ear cress), this protein is Laccase-9 (LAC9).